The primary structure comprises 354 residues: 3-isopropylmalate dehydrogenase (354 aa).

76 to 87 provides a ligand contact to NAD(+); that stretch reads GPRWDSAKERPE. Residues R94, R104, R130, and D215 each coordinate substrate. The Mg(2+) site is built by D215, D239, and D243. Position 273-285 (273-285) interacts with NAD(+); it reads GSAPDIAGKNKAN.

The protein belongs to the isocitrate and isopropylmalate dehydrogenases family. LeuB type 1 subfamily. In terms of assembly, homodimer. Mg(2+) is required as a cofactor. Requires Mn(2+) as cofactor.

It localises to the cytoplasm. It carries out the reaction (2R,3S)-3-isopropylmalate + NAD(+) = 4-methyl-2-oxopentanoate + CO2 + NADH. The protein operates within amino-acid biosynthesis; L-leucine biosynthesis; L-leucine from 3-methyl-2-oxobutanoate: step 3/4. Catalyzes the oxidation of 3-carboxy-2-hydroxy-4-methylpentanoate (3-isopropylmalate) to 3-carboxy-4-methyl-2-oxopentanoate. The product decarboxylates to 4-methyl-2 oxopentanoate. This is 3-isopropylmalate dehydrogenase from Bacillus cereus (strain ATCC 14579 / DSM 31 / CCUG 7414 / JCM 2152 / NBRC 15305 / NCIMB 9373 / NCTC 2599 / NRRL B-3711).